The sequence spans 411 residues: Allantoate amidohydrolase (411 aa).

Residues His81, Asp92, Glu127, and His190 each contribute to the Zn(2+) site. Allantoate-binding residues include Arg215, Asn275, and Arg288. His382 contacts Zn(2+).

This sequence belongs to the peptidase M20 family. Homodimer. Zn(2+) serves as cofactor.

It is found in the cytoplasm. The catalysed reaction is allantoate + H2O + 2 H(+) = (S)-2-ureidoglycine + NH4(+) + CO2. The protein operates within nitrogen metabolism; (S)-allantoin degradation. Its activity is regulated as follows. Sulfate could be an allosteric effector of the enzyme that is responsible for stabilizing substrate binding. In addition, this anion effector may act as a counterion during enzyme-mediated catalysis. Its function is as follows. Involved in the anaerobic nitrogen utilization via the assimilation of allantoin. Catalyzes specifically the hydrolysis of allantoate to yield CO2, NH3 and S-ureidoglycine, which is unstable and readily undergoes a second deamination by S-ureidoglycine aminohydrolase AllE to yield S-ureidoglycolate and NH3. In vivo, the spontaneous release of S-ureidoglycolate and ammonia from S-ureidoglycine appears to be too slow to sustain an efficient flux of nitrogen. In Escherichia coli (strain K12), this protein is Allantoate amidohydrolase.